Consider the following 43-residue polypeptide: Neurotrophin-3 (43 aa).

The protein belongs to the NGF-beta family.

The protein resides in the secreted. Functionally, seems to promote the survival of visceral and proprioceptive sensory neurons. This Raja clavata (Thornback ray) protein is Neurotrophin-3 (ntf3).